Reading from the N-terminus, the 303-residue chain is Type II methyltransferase M.MjaI (303 aa).

It belongs to the N(4)/N(6)-methyltransferase family. N(4) subfamily.

It carries out the reaction a 2'-deoxycytidine in DNA + S-adenosyl-L-methionine = an N(4)-methyl-2'-deoxycytidine in DNA + S-adenosyl-L-homocysteine + H(+). A beta subtype methylase that recognizes the double-stranded sequence 5'-CTAG-3', methylates C-1 on both strands, and protects the DNA from cleavage by the MjaI endonuclease. This chain is Type II methyltransferase M.MjaI (mjaIM), found in Methanocaldococcus jannaschii (strain ATCC 43067 / DSM 2661 / JAL-1 / JCM 10045 / NBRC 100440) (Methanococcus jannaschii).